The sequence spans 276 residues: Probable endonuclease 4 (276 aa).

Positions 70, 108, 143, 176, 179, 210, 223, 225, and 255 each coordinate Zn(2+).

The protein belongs to the AP endonuclease 2 family. The cofactor is Zn(2+).

The enzyme catalyses Endonucleolytic cleavage to 5'-phosphooligonucleotide end-products.. In terms of biological role, endonuclease IV plays a role in DNA repair. It cleaves phosphodiester bonds at apurinic or apyrimidinic (AP) sites, generating a 3'-hydroxyl group and a 5'-terminal sugar phosphate. The chain is Probable endonuclease 4 from Mesomycoplasma hyopneumoniae (strain 7448) (Mycoplasma hyopneumoniae).